We begin with the raw amino-acid sequence, 166 residues long: 2S seed storage protein 4 (166 aa).

Positions 1-21 are cleaved as a signal peptide; the sequence is MANKLFLVCAALALCFILTNA. 2 consecutive propeptides follow at residues 22–37 and 73–88; these read SVYR…DASN and GPSL…DIEN.

The protein belongs to the 2S seed storage albumins family. The mature protein consists of a small and a large chain linked by disulfide bonds.

Functionally, this is a 2S seed storage protein. In Arabidopsis thaliana (Mouse-ear cress), this protein is 2S seed storage protein 4 (AT2S4).